A 407-amino-acid chain; its full sequence is 12S rRNA N(4)-cytidine methyltransferase METTL15 (407 aa).

Residues 100–102 (GGH), D119, F146, D169, and Q176 contribute to the S-adenosyl-L-methionine site. At S358 the chain carries Phosphoserine.

It belongs to the methyltransferase superfamily. RsmH family.

The protein localises to the mitochondrion matrix. It carries out the reaction cytidine(839) in 12S rRNA + S-adenosyl-L-methionine = N(4)-methylcytidine(839) in 12S rRNA + S-adenosyl-L-homocysteine + H(+). Functionally, N4-methylcytidine (m4C) methyltransferase responsible for the methylation of position C839 in mitochondrial 12S rRNA. Involved in the stabilization of 12S rRNA folding, therefore facilitating the assembly of the mitochondrial small ribosomal subunits. The sequence is that of 12S rRNA N(4)-cytidine methyltransferase METTL15 from Homo sapiens (Human).